A 415-amino-acid polypeptide reads, in one-letter code: Dynein assembly factor with WD repeat domains 1 (415 aa).

8 WD repeats span residues 90-129 (AHILPLTNVAFNKSGSSFITGSYDRTCKVWDTASGEELHT), 132-174 (GHRN…HTFR), 175-214 (GHTAEIVCLVFNPQSTLIATGSMDTTAKLWDIQSGEEALT), 217-256 (GHAAEIISLSFNTTGDRLITGSFDHTVSVWEIPSGRRIHT), 259-298 (GHRGEISSAQFNWDCSLIATASMDKSCKLWDSLNGKCVAT), 301-340 (GHDDEVLDVTFDSTGQLVATASADGTARVYSASSRKCLAK), 343-384 (GHEG…QVLK), and 386-415 (HTDEIFSCAFNYEGNTIITGSKDNTCRIWR).

Belongs to the WD repeat WDR69 family.

It localises to the cytoplasm. The protein resides in the cytoskeleton. It is found in the flagellum basal body. The protein localises to the flagellum axoneme. In terms of biological role, required for axonemal dynein assembly and ciliary motility in ciliated organs, including Kupffer's vesicle, during embryogenesis. Facilitates the onset of robust cilia motility during development. The sequence is that of Dynein assembly factor with WD repeat domains 1 (daw1) from Xenopus laevis (African clawed frog).